Consider the following 339-residue polypeptide: tRNA dimethylallyltransferase (339 aa).

Glycine 33–threonine 40 contributes to the ATP binding site. Threonine 35 to threonine 40 contributes to the substrate binding site. Interaction with substrate tRNA regions lie at residues aspartate 58–leucine 61 and glutamine 182–arginine 186.

This sequence belongs to the IPP transferase family. As to quaternary structure, monomer. Requires Mg(2+) as cofactor.

The catalysed reaction is adenosine(37) in tRNA + dimethylallyl diphosphate = N(6)-dimethylallyladenosine(37) in tRNA + diphosphate. Functionally, catalyzes the transfer of a dimethylallyl group onto the adenine at position 37 in tRNAs that read codons beginning with uridine, leading to the formation of N6-(dimethylallyl)adenosine (i(6)A). The polypeptide is tRNA dimethylallyltransferase (Acidithiobacillus ferrooxidans (strain ATCC 23270 / DSM 14882 / CIP 104768 / NCIMB 8455) (Ferrobacillus ferrooxidans (strain ATCC 23270))).